Here is a 261-residue protein sequence, read N- to C-terminus: MVVVAPAQSPAAGAPKVLLLSGQPAATGGAPAGRALPVMVPGQQGASPEGASGVPPQARKRQRLTHLSPEEKALRRKLKNRVAAQTARDRKKARMSELEQQVVDLEEENQKLLLENQLLREKTHGLVVENQELRQRLGMDALVTEEEAETKGNGAGLVAGSAESAALRLRAPLQQVQAQLSPLQNISPWTLMALTLQTLSLTSCWAFCSTWTQSCSSDVLPQSLPAWSSSQKWTQKDPVPYRPPLLHPWGRHQPSWKPLMN.

The Cytoplasmic segment spans residues 1–185 (MVVVAPAQSP…VQAQLSPLQN (185 aa)). The span at 27-37 (TGGAPAGRALP) shows a compositional bias: low complexity. The disordered stretch occupies residues 27-65 (TGGAPAGRALPVMVPGQQGASPEGASGVPPQARKRQRLT). Residues Ser-47 and Ser-68 each carry the phosphoserine modification. Residues 70-133 (EEKALRRKLK…HGLVVENQEL (64 aa)) enclose the bZIP domain. The interval 72–94 (KALRRKLKNRVAAQTARDRKKAR) is basic motif. The segment at 76 to 92 (RKLKNRVAAQTARDRKK) is nuclear localization signal (NLS). The segment at 98 to 133 (LEQQVVDLEEENQKLLLENQLLREKTHGLVVENQEL) is leucine-zipper. Residues 186–203 (ISPWTLMALTLQTLSLTS) traverse the membrane as a helical; Signal-anchor for type II membrane protein segment. The Lumenal portion of the chain corresponds to 204–261 (CWAFCSTWTQSCSSDVLPQSLPAWSSSQKWTQKDPVPYRPPLLHPWGRHQPSWKPLMN).

Belongs to the bZIP family. In terms of assembly, isoform 1 interacts with HM13. Isoform 1 interacts with RNF139; the interaction induces ubiquitination and degradation of isoform 1. Isoform 1 interacts (via luminal domain) with DERL1; the interaction obviates the need for ectodomain shedding prior HM13/SPP-mediated XBP1 isoform 1 cleavage. Isoform 1 interacts with HDAC3 and AKT1; the interactions occur in endothelial cell (EC) under disturbed flow. Isoform 1 interacts with the oncoprotein FOS. Interacts with SIRT1. In terms of processing, isoform 1 is ubiquitinated, leading to proteasome-mediated degradation in response to ER stress. X-box-binding protein 1, cytoplasmic form and luminal form are produced by intramembrane proteolytic cleavage of ER membrane-anchored isoform 1 triggered by HM13/SPP in a DERL1-RNF139-dependent and VCP/p97-independent manner. X-box-binding protein 1, luminal form is ubiquitinated leading to proteasomal degradation. Post-translationally, acetylated by EP300; acetylation positively regulates the transcriptional activity of XBP1. Deacetylated by SIRT1; deacetylation negatively regulates the transcriptional activity of XBP1.

Its subcellular location is the nucleus. The protein localises to the endoplasmic reticulum. It is found in the cytoplasm. The protein resides in the endoplasmic reticulum membrane. It localises to the membrane. Functionally, functions as a transcription factor during endoplasmic reticulum (ER) stress by regulating the unfolded protein response (UPR). Required for cardiac myogenesis and hepatogenesis during embryonic development, and the development of secretory tissues such as exocrine pancreas and salivary gland. Involved in terminal differentiation of B lymphocytes to plasma cells and production of immunoglobulins. Modulates the cellular response to ER stress in a PIK3R-dependent manner. Binds to the cis-acting X box present in the promoter regions of major histocompatibility complex class II genes. Involved in VEGF-induced endothelial cell (EC) proliferation and retinal blood vessel formation during embryonic development but also for angiogenesis in adult tissues under ischemic conditions. Functions also as a major regulator of the UPR in obesity-induced insulin resistance and type 2 diabetes for the management of obesity and diabetes prevention. In terms of biological role, acts as a weak transcriptional factor. Together with HDAC3, contributes to the activation of NFE2L2-mediated HMOX1 transcription factor gene expression in a PI(3)K/mTORC2/Akt-dependent signaling pathway leading to EC survival under disturbed flow/oxidative stress. Binds to the ER stress response element (ERSE) upon ER stress. Binds to the consensus 5'-GATGACGTG[TG]N(3)[AT]T-3' sequence related to cAMP responsive element (CRE)-like sequences. Associates preferentially to the HDAC3 gene promoter region in a static flow-dependent manner. Binds to the CDH5/VE-cadherin gene promoter region. The polypeptide is X-box-binding protein 1 (Bos taurus (Bovine)).